Here is a 486-residue protein sequence, read N- to C-terminus: MSFLDDEKWTGRVFTGSWERAAGGDAAVIEPATGDELGRVGIASPQDLAASAAKAAEAQRAWAATSFQERAAVLRRAGDLWQQHAAELKDWLIRESGSIPGKADFELHVAAQECYEAAALPSHPTGEVLPSEAPRLSMARRVPAGVVGVIAPFNAPLILSIRSVAPALALGNSVVLKPDPRTAVCGGVALARVFEEAGLPAGVLHVLPGGPDVGAALVEDKHVRVISFTGSTAAGRAVGESAGRHLKRAHLELGGNSALIVLDDADLEQAMSAAAWGSFFHQGQICMTTGRHLVHASLYDEYVDRLADKASHLPVGNPFTEQVALGPIIDAKQRDKIHGLVTSSVDAGAKVAAGGTYEDLFYRATVLAGAGPSVPAYDQEVFGPVAPVAKFTSLDEAAKLASESEYGLSLGIITADVAKGLALADRIPTGIAHINDQTVNDEALAPFGGVFDSGTGSRFGGPAANIEAFTETRWVTMRGDVAGYPF.

NAD(+) is bound by residues 210-211 (GP), 230-231 (GS), and 252-254 (ELG). Glutamate 252 acts as the Proton acceptor in catalysis. Cysteine 286 (nucleophile) is an active-site residue. 380-382 (EVF) is an NAD(+) binding site.

The protein belongs to the aldehyde dehydrogenase family.

The enzyme catalyses vanillin + NAD(+) + H2O = vanillate + NADH + 2 H(+). In terms of biological role, catalyzes NAD(+)-dependent oxidation of vanillin to vanillate. Also oxidizes other aromatic aldehydes including benzaldehyde, coniferyl aldehyde and cinnamaldehyde, but has a preference for vanillin. Not active with NADP(+). Involved in the degradation pathway of lignin-derived aromatic compounds of plant cell walls. Catalyzes the conversion of vanillin to vanillate due to toxicity of vanillin to the cells. This is Vanillin dehydrogenase from Amycolatopsis sp. (strain ATCC 39116 / 75iv2).